The primary structure comprises 451 residues: Sex peptide receptor-related protein 2 (451 aa).

Residues methionine 1–glutamine 63 are Extracellular-facing. Residue asparagine 15 is glycosylated (N-linked (GlcNAc...) asparagine). Residues isoleucine 64–serine 84 traverse the membrane as a helical segment. Over lysine 85–lysine 97 the chain is Cytoplasmic. The helical transmembrane segment at tyrosine 98–phenylalanine 118 threads the bilayer. The Extracellular portion of the chain corresponds to serine 119–serine 140. An intrachain disulfide couples cysteine 134 to cysteine 225. Residues methionine 141–alanine 161 traverse the membrane as a helical segment. At glutamine 162–arginine 183 the chain is on the cytoplasmic side. A helical membrane pass occupies residues leucine 184 to tyrosine 204. Topologically, residues glutamate 205–leucine 251 are extracellular. An N-linked (GlcNAc...) asparagine glycan is attached at asparagine 218. Residues glycine 252 to isoleucine 272 form a helical membrane-spanning segment. Residues arginine 273–serine 301 lie on the Cytoplasmic side of the membrane. Residues leucine 302–methionine 322 traverse the membrane as a helical segment. At glycine 323–lysine 334 the chain is on the extracellular side. The helical transmembrane segment at isoleucine 335 to isoleucine 355 threads the bilayer. Over alanine 356–aspartate 451 the chain is Cytoplasmic.

The protein belongs to the G-protein coupled receptor 1 family. In terms of tissue distribution, expressed in head neurons including the ASE sensory neurons and the ASI and AWB chemosensory neurons, the midbody neurons SDQ, and motor neurons in the tail.

The protein localises to the cell membrane. G-protein coupled receptor for the neuropeptide like protein nlp-38. Plays a role in several types of aversive gustatory associative learning including gustatory plasticity and salt avoidance learning. Its role in salt avoidance learning may be through activation of the transcription factor crh-1/CREB and de novo transcription and translation, which in turn promotes the formation of long-term memory. This is Sex peptide receptor-related protein 2 from Caenorhabditis elegans.